The following is a 1208-amino-acid chain: Chromosome partition protein Smc (1208 aa).

Pro-32–Asn-39 provides a ligand contact to ATP. 3 coiled-coil regions span residues Val-170–Ile-205, Glu-239–Gln-504, and Val-694–Asp-1054.

It belongs to the SMC family. As to quaternary structure, homodimer.

It is found in the cytoplasm. Functionally, required for chromosome condensation and partitioning. The protein is Chromosome partition protein Smc of Thauera aminoaromatica.